The primary structure comprises 390 residues: S-adenosylmethionine:tRNA ribosyltransferase-isomerase (390 aa).

Residues 1-22 are disordered; the sequence is MTQPLSQDQHDSSSNMPTDNAE.

It belongs to the QueA family. As to quaternary structure, monomer.

The protein localises to the cytoplasm. It carries out the reaction 7-aminomethyl-7-carbaguanosine(34) in tRNA + S-adenosyl-L-methionine = epoxyqueuosine(34) in tRNA + adenine + L-methionine + 2 H(+). It functions in the pathway tRNA modification; tRNA-queuosine biosynthesis. Its function is as follows. Transfers and isomerizes the ribose moiety from AdoMet to the 7-aminomethyl group of 7-deazaguanine (preQ1-tRNA) to give epoxyqueuosine (oQ-tRNA). The polypeptide is S-adenosylmethionine:tRNA ribosyltransferase-isomerase (Psychrobacter sp. (strain PRwf-1)).